Reading from the N-terminus, the 223-residue chain is Deoxyribose-phosphate aldolase (223 aa).

Asp-89 (proton donor/acceptor) is an active-site residue. Lys-152 acts as the Schiff-base intermediate with acetaldehyde in catalysis. Residue Lys-181 is the Proton donor/acceptor of the active site.

It belongs to the DeoC/FbaB aldolase family. DeoC type 1 subfamily.

It localises to the cytoplasm. The enzyme catalyses 2-deoxy-D-ribose 5-phosphate = D-glyceraldehyde 3-phosphate + acetaldehyde. Its pathway is carbohydrate degradation; 2-deoxy-D-ribose 1-phosphate degradation; D-glyceraldehyde 3-phosphate and acetaldehyde from 2-deoxy-alpha-D-ribose 1-phosphate: step 2/2. In terms of biological role, catalyzes a reversible aldol reaction between acetaldehyde and D-glyceraldehyde 3-phosphate to generate 2-deoxy-D-ribose 5-phosphate. In Bacillus cereus (strain AH187), this protein is Deoxyribose-phosphate aldolase.